A 120-amino-acid chain; its full sequence is NAD(P)H-quinone oxidoreductase subunit 3 (120 aa).

A run of 3 helical transmembrane segments spans residues Tyr-7–Ala-27, Met-64–Val-84, and Leu-89–Val-109.

Belongs to the complex I subunit 3 family. NDH-1 can be composed of about 15 different subunits; different subcomplexes with different compositions have been identified which probably have different functions.

The protein localises to the cellular thylakoid membrane. It catalyses the reaction a plastoquinone + NADH + (n+1) H(+)(in) = a plastoquinol + NAD(+) + n H(+)(out). It carries out the reaction a plastoquinone + NADPH + (n+1) H(+)(in) = a plastoquinol + NADP(+) + n H(+)(out). Its function is as follows. NDH-1 shuttles electrons from an unknown electron donor, via FMN and iron-sulfur (Fe-S) centers, to quinones in the respiratory and/or the photosynthetic chain. The immediate electron acceptor for the enzyme in this species is believed to be plastoquinone. Couples the redox reaction to proton translocation, and thus conserves the redox energy in a proton gradient. Cyanobacterial NDH-1 also plays a role in inorganic carbon-concentration. This chain is NAD(P)H-quinone oxidoreductase subunit 3, found in Crocosphaera subtropica (strain ATCC 51142 / BH68) (Cyanothece sp. (strain ATCC 51142)).